Here is a 270-residue protein sequence, read N- to C-terminus: Putative protein-disulfide oxidoreductase RT0103 (270 aa).

A signal peptide spans 1–17 (MKNIFIVLIFLFLSSCA). A Thioredoxin domain is found at 71 to 264 (SVLTQDLHEQ…ISRAVDRALE (194 aa)). A disulfide bridge connects residues Cys117 and Cys120.

It belongs to the thioredoxin family. DsbA subfamily.

It localises to the periplasm. May be required for disulfide bond formation in some proteins. In Rickettsia typhi (strain ATCC VR-144 / Wilmington), this protein is Putative protein-disulfide oxidoreductase RT0103.